The chain runs to 42 residues: Photosystem I reaction center subunit IX (42 aa).

Residues 7–27 (YLSTAPVLATLWFGFLAGLLI) traverse the membrane as a helical segment.

It belongs to the PsaJ family.

It localises to the plastid. It is found in the chloroplast thylakoid membrane. Its function is as follows. May help in the organization of the PsaE and PsaF subunits. This chain is Photosystem I reaction center subunit IX, found in Psilotum nudum (Whisk fern).